The chain runs to 443 residues: Methionine aminopeptidase 2-1 (443 aa).

Positions 1 to 90 are disordered; it reads MAAQADDELN…RVPVSELFPN (90 aa). Residues 33-48 show a composition bias toward acidic residues; that stretch reads ADNDDSEDDEKEEEGG. Residues 58–73 are compositionally biased toward basic residues; the sequence is KKKKKRKPKKKKKGGA. Substrate is bound at residue His196. Residues Asp216, Asp227, and His296 each contribute to the a divalent metal cation site. His304 is a substrate binding site. A divalent metal cation contacts are provided by Glu329 and Glu424.

Belongs to the peptidase M24A family. Methionine aminopeptidase eukaryotic type 2 subfamily. Co(2+) is required as a cofactor. Requires Zn(2+) as cofactor. Mn(2+) serves as cofactor. It depends on Fe(2+) as a cofactor.

It localises to the cytoplasm. It catalyses the reaction Release of N-terminal amino acids, preferentially methionine, from peptides and arylamides.. Cotranslationally removes the N-terminal methionine from nascent proteins. The N-terminal methionine is often cleaved when the second residue in the primary sequence is small and uncharged (Met-Ala-, Cys, Gly, Pro, Ser, Thr, or Val). This is Methionine aminopeptidase 2-1 from Talaromyces stipitatus (strain ATCC 10500 / CBS 375.48 / QM 6759 / NRRL 1006) (Penicillium stipitatum).